Reading from the N-terminus, the 541-residue chain is Zinc finger protein 655 (541 aa).

The tract at residues 1–22 (MEEVTSQEAAESPRGHFQPLEN) is disordered. 6 C2H2-type zinc fingers span residues 243-265 (YKCD…QRIH), 271-293 (YKCK…KRIH), 334-356 (YKCG…QRTH), 361-383 (CKCT…QRLH), 411-433 (YSCN…QRIH), and 439-461 (HECN…HKMH). A C2H2-type 7; degenerate zinc finger spans residues 495–517 (FDCDAWEENFSQRAHLIQHERVH).

Belongs to the krueppel C2H2-type zinc-finger protein family. Interacts with VAV1 and CDK4. Interacts with INTS13; promoting association with the integrator complex.

Its subcellular location is the nucleus. In terms of biological role, probable transcription factor. The polypeptide is Zinc finger protein 655 (Znf655) (Mus musculus (Mouse)).